A 217-amino-acid polypeptide reads, in one-letter code: Pro-Pro endopeptidase (217 aa).

The N-terminal stretch at 1-27 (MKWDKRVVALILAVMIVCPLFAAPAHA) is a signal peptide. Residues 30–216 (QSILDKLVVL…TYEFMAKLFA (187 aa)) form the ATLF-like domain. Positions 112–115 (SERV) are plays a crucial role in substrate specificity. Position 137 (His-137) interacts with Zn(2+). The active-site Proton acceptor is Glu-138. His-141, Tyr-174, and Glu-181 together coordinate Zn(2+).

It belongs to the peptidase M34 family. Pro-Pro endopeptidase subfamily. Monomer. Zn(2+) is required as a cofactor.

Its subcellular location is the secreted. It catalyses the reaction The enzyme catalyzes the hydrolytic cleavage of peptide bonds between two proline residues.. Zinc-dependent endoprotease with a unique preference for proline residues surrounding the scissile bond, which cleaves in a PLP-|-PVP motif. Cleaves the cell surface protein encoded by an adjacent gene, which contains two PPEP-2 cleaving sites and putative extracellular matrix-binding domains. Thereby, may have a role in the regulation of P.alvei adhesion. Is not able to cleave within the PVP-|-PVQ motif, and only shows a very poor cleavage of the VNP-|-PVP motif in vitro, which is the optimal substrate peptide for PPEP-1 from P.difficile. The sequence is that of Pro-Pro endopeptidase from Paenibacillus alvei (strain ATCC 6344 / DSM 29 / NBRC 3343 / NCIMB 9371 / NCTC 6352) (Bacillus alvei).